The chain runs to 155 residues: Glutamyl-tRNA(Gln) amidotransferase subunit C, chloroplastic/mitochondrial (155 aa).

The N-terminal 52 residues, 1 to 52 (MATRALLAVIYASPNRCYISPSRIKIQSLTCSSSSHYYQRQSRKNHRIARSY), are a transit peptide targeting the chloroplast and mitochondrion.

Belongs to the GatC family. As to quaternary structure, subunit of the heterotrimeric GatCAB amidotransferase (AdT) complex, composed of A, B and C subunits.

The protein resides in the mitochondrion. The protein localises to the plastid. It is found in the chloroplast. It carries out the reaction L-glutamyl-tRNA(Gln) + L-glutamine + ATP + H2O = L-glutaminyl-tRNA(Gln) + L-glutamate + ADP + phosphate + H(+). Functionally, allows the formation of correctly charged Gln-tRNA(Gln) through the transamidation of misacylated Glu-tRNA(Gln) in chloroplasts and mitochondria. The reaction takes place in the presence of glutamine and ATP through an activated gamma-phospho-Glu-tRNA(Gln). This Arabidopsis thaliana (Mouse-ear cress) protein is Glutamyl-tRNA(Gln) amidotransferase subunit C, chloroplastic/mitochondrial.